A 131-amino-acid chain; its full sequence is Ribonuclease VapC13 (131 aa).

Residues 2–128 form the PINc domain; it reads ILVDSNIPMY…RGFDSYPGIK (127 aa). Mg(2+) contacts are provided by Asp-5 and Asp-99.

The protein belongs to the PINc/VapC protein family. The cofactor is Mg(2+).

The protein resides in the secreted. Toxic component of a type II toxin-antitoxin (TA) system. An RNase. The cognate antitoxin is VapB13. In Mycobacterium tuberculosis (strain ATCC 25618 / H37Rv), this protein is Ribonuclease VapC13.